The chain runs to 119 residues: Ribonuclease P protein component (119 aa).

The protein belongs to the RnpA family. In terms of assembly, consists of a catalytic RNA component (M1 or rnpB) and a protein subunit.

The catalysed reaction is Endonucleolytic cleavage of RNA, removing 5'-extranucleotides from tRNA precursor.. Its function is as follows. RNaseP catalyzes the removal of the 5'-leader sequence from pre-tRNA to produce the mature 5'-terminus. It can also cleave other RNA substrates such as 4.5S RNA. The protein component plays an auxiliary but essential role in vivo by binding to the 5'-leader sequence and broadening the substrate specificity of the ribozyme. This is Ribonuclease P protein component from Escherichia coli O157:H7.